The sequence spans 121 residues: Outer membrane lipoprotein BBA14 (121 aa).

The N-terminal stretch at 1-19 (MQIKNFPFLFLLNSLIIFS) is a signal peptide. Cys20 carries the N-palmitoyl cysteine lipid modification. Cys20 is lipidated: S-diacylglycerol cysteine.

It is found in the cell outer membrane. Outer membrane lipoprotein that could act as a component of a potential toxin-antitoxin system in B.burgdorferi which could serve as a plasmid stabilization mechanism in a growing bacterial population. This is Outer membrane lipoprotein BBA14 from Borreliella burgdorferi (strain ATCC 35210 / DSM 4680 / CIP 102532 / B31) (Borrelia burgdorferi).